Reading from the N-terminus, the 475-residue chain is PRAME family member 20 (475 aa).

One copy of the LRR 1; degenerate repeat lies at 97–124 (RWKLQVLDLQDVSENFWMVWSEAMARRC). Residues 179-203 (HLCCKKLKMLGMLFHNIRNILKTVN) form an LRR 2; degenerate repeat. One copy of the LRR 3; degenerate repeat lies at 204–230 (LDCIQEVEVNCNWTLPVLAEFTPYLGQ). Residues 231 to 265 (MRNLRKLVLSDIDSRYISPEQKKEFVTQFTTQFLK) form an LRR 4; degenerate repeat. 5 LRR repeats span residues 266-291 (LRCL…LSCL), 292-323 (KTSL…GQLK), 324-342 (TLDL…PLQV), 348-375 (AATL…ALSR), and 376-400 (CFEL…LLCH).

Belongs to the PRAME family.

This chain is PRAME family member 20, found in Homo sapiens (Human).